The following is a 104-amino-acid chain: L-rhamnose mutarotase (104 aa).

Residue Tyr18 participates in substrate binding. The active-site Proton donor is His22. Substrate contacts are provided by residues Tyr41 and 76–77 (WW).

The protein belongs to the rhamnose mutarotase family. Homodimer.

It localises to the cytoplasm. The enzyme catalyses alpha-L-rhamnose = beta-L-rhamnose. The protein operates within carbohydrate metabolism; L-rhamnose metabolism. Its function is as follows. Involved in the anomeric conversion of L-rhamnose. The protein is L-rhamnose mutarotase of Sinorhizobium fredii (strain NBRC 101917 / NGR234).